Here is a 229-residue protein sequence, read N- to C-terminus: MVERLAELERALGITFRDRKLLQTALMHRSLFNEQPHLLSNLSDNERLEFLGDSVLHFVTTTWLFQQFPHQNESTLTSWRAALVSTKGLAECAATLNLGQYAFLSRGEDTPKGRQRSKLLADLFEAVIGAIYLDQGLEAARAFIEPFLHERIGTLQTAVLDPTTRLQEIVQSRHKQLPKYYLIDERGPDHQREYVMAVTVEGHEYTGTGPSKKAAKKAAAQAALADIDR.

The region spanning 5–136 (LAELERALGI…VIGAIYLDQG (132 aa)) is the RNase III domain. Glu-49 is a binding site for Mg(2+). Asp-53 is an active-site residue. Residues Asp-122 and Glu-125 each contribute to the Mg(2+) site. Glu-125 is an active-site residue. The DRBM domain maps to 161 to 229 (DPTTRLQEIV…AQAALADIDR (69 aa)).

It belongs to the ribonuclease III family. As to quaternary structure, homodimer. Mg(2+) serves as cofactor.

It is found in the cytoplasm. The catalysed reaction is Endonucleolytic cleavage to 5'-phosphomonoester.. Its function is as follows. Digests double-stranded RNA. Involved in the processing of primary rRNA transcript to yield the immediate precursors to the large and small rRNAs (23S and 16S). Processes some mRNAs, and tRNAs when they are encoded in the rRNA operon. Processes pre-crRNA and tracrRNA of type II CRISPR loci if present in the organism. The sequence is that of Ribonuclease 3 from Chloroflexus aggregans (strain MD-66 / DSM 9485).